The primary structure comprises 593 residues: AT-rich interactive domain-containing protein 3A (593 aa).

Positions 14–222 (QQRARQELEA…PQLQPPDHGD (209 aa)) are disordered. Positions 41-53 (AAPDEDREPESAR) are enriched in basic and acidic residues. Residues 54 to 87 (MQRAQMAALAAMRAAAAGLGHPASPGGSEDGPPG) are compositionally biased toward low complexity. Phosphoserine occurs at positions 77, 81, and 88. Residue Thr98 is modified to Phosphothreonine. 2 positions are modified to phosphoserine: Ser101 and Ser119. The span at 104 to 127 (RGREGPGEEHFEDMASDEDMKPKW) shows a compositional bias: basic and acidic residues. The acidic stretch occupies residues 119–156 (SDEDMKPKWEEEEMEEDLGEDEEEEEEDYEDEEEEEDE). The segment covering 128-158 (EEEEMEEDLGEDEEEEEEDYEDEEEEEDEEG) has biased composition (acidic residues). In terms of domain architecture, ARID spans 238–330 (DPKRKEFLDD…YLYPYECEKR (93 aa)). Phosphoserine occurs at positions 353 and 362. Glycyl lysine isopeptide (Lys-Gly) (interchain with G-Cter in SUMO2) cross-links involve residues Lys398, Lys399, Lys452, and Lys462. An REKLES domain is found at 444–541 (AALEQLREKL…GVLFAQPPAP (98 aa)). Residues 445-488 (ALEQLREKLESAEPPEKKMALVADEQQRLMQRALQQNFLAMAAQ) are important for nuclear localization. A homodimerization region spans residues 490–513 (PMSIRINSQASESRQDSAVNLTGT). 2 disordered regions span residues 497–516 (SQAS…TNGS) and 539–593 (PAPT…NSLP). Positions 537–557 (QPPAPTPTSAPNKGGGGGGGS) are important for cytoplasmic localization. Residues 549 to 576 (KGGGGGGGSSSNAGGRGGNTGTSGGQAG) show a composition bias toward gly residues. A compositionally biased stretch (low complexity) spans 580-593 (LSTPSTSTSNNSLP).

As to quaternary structure, homodimer. Heterodimer with ARID3B. Interacts with E2F1. Interacts with GTF2I and BTK. Widely expressed, with highest expression in skeletal muscle, thalamus, and colon.

The protein resides in the nucleus. It localises to the cytoplasm. Transcription factor which may be involved in the control of cell cycle progression by the RB1/E2F1 pathway and in B-cell differentiation. The protein is AT-rich interactive domain-containing protein 3A (ARID3A) of Homo sapiens (Human).